The chain runs to 152 residues: Small ribosomal subunit protein uS13 (152 aa).

This sequence belongs to the universal ribosomal protein uS13 family. Component of the small ribosomal subunit.

The protein localises to the cytoplasm. In terms of biological role, component of the small ribosomal subunit. The ribosome is a large ribonucleoprotein complex responsible for the synthesis of proteins in the cell. The polypeptide is Small ribosomal subunit protein uS13 (rps18) (Ictalurus punctatus (Channel catfish)).